The following is a 122-amino-acid chain: Large ribosomal subunit protein uL14 (122 aa).

Belongs to the universal ribosomal protein uL14 family. Part of the 50S ribosomal subunit. Forms a cluster with proteins L3 and L19. In the 70S ribosome, L14 and L19 interact and together make contacts with the 16S rRNA in bridges B5 and B8.

In terms of biological role, binds to 23S rRNA. Forms part of two intersubunit bridges in the 70S ribosome. The chain is Large ribosomal subunit protein uL14 from Mycobacterium leprae (strain TN).